Consider the following 327-residue polypeptide: Peroxidase 21 (327 aa).

The signal sequence occupies residues 1–28; that stretch reads MANAKPFCLLGFFCLLLQLFSIFHIGNG. Intrachain disulfides connect Cys-39–Cys-118, Cys-72–Cys-77, Cys-124–Cys-323, and Cys-204–Cys-231. The active-site Proton acceptor is His-70. Positions 71, 74, 78, and 80 each coordinate Ca(2+). Pro-167 contributes to the substrate binding site. Asn-170 is a glycosylation site (N-linked (GlcNAc...) asparagine). Residue His-197 coordinates heme b. Ser-198 contacts Ca(2+). Positions 247, 250, and 255 each coordinate Ca(2+).

Belongs to the peroxidase family. Classical plant (class III) peroxidase subfamily. The cofactor is heme b. Ca(2+) serves as cofactor. Preferentially expressed in roots and leaves, slightly in stems.

It carries out the reaction 2 a phenolic donor + H2O2 = 2 a phenolic radical donor + 2 H2O. Removal of H(2)O(2), oxidation of toxic reductants, biosynthesis and degradation of lignin, suberization, auxin catabolism, response to environmental stresses such as wounding, pathogen attack and oxidative stress. These functions might be dependent on each isozyme/isoform in each plant tissue. Functionally, might function as heat shock-like defense protein. May be implicated in the systemic acquired resistance response. This chain is Peroxidase 21 (PER21), found in Arabidopsis thaliana (Mouse-ear cress).